The sequence spans 285 residues: Acetyl-coenzyme A carboxylase carboxyl transferase subunit beta (285 aa).

Residues 29–285 form the CoA carboxyltransferase N-terminal domain; it reads IMTKCPNCKK…ILKIHQEVSN (257 aa). Positions 33, 36, 52, and 55 each coordinate Zn(2+). A C4-type zinc finger spans residues 33–55; the sequence is CPNCKKIMYTKELNENLNVCFNC.

The protein belongs to the AccD/PCCB family. As to quaternary structure, acetyl-CoA carboxylase is a heterohexamer composed of biotin carboxyl carrier protein (AccB), biotin carboxylase (AccC) and two subunits each of ACCase subunit alpha (AccA) and ACCase subunit beta (AccD). Zn(2+) serves as cofactor.

The protein resides in the cytoplasm. The enzyme catalyses N(6)-carboxybiotinyl-L-lysyl-[protein] + acetyl-CoA = N(6)-biotinyl-L-lysyl-[protein] + malonyl-CoA. The protein operates within lipid metabolism; malonyl-CoA biosynthesis; malonyl-CoA from acetyl-CoA: step 1/1. Its function is as follows. Component of the acetyl coenzyme A carboxylase (ACC) complex. Biotin carboxylase (BC) catalyzes the carboxylation of biotin on its carrier protein (BCCP) and then the CO(2) group is transferred by the transcarboxylase to acetyl-CoA to form malonyl-CoA. This chain is Acetyl-coenzyme A carboxylase carboxyl transferase subunit beta, found in Staphylococcus epidermidis (strain ATCC 35984 / DSM 28319 / BCRC 17069 / CCUG 31568 / BM 3577 / RP62A).